The chain runs to 1057 residues: Atrial natriuretic peptide receptor 1 (1057 aa).

An N-terminal signal peptide occupies residues 1–28 (MPGSRRVRPRLRALLLLPPLLLLRSGHA). Residues 29-469 (SDLTVAVVLP…CNQDHFSTLE (441 aa)) lie on the Extracellular side of the membrane. Asn-41 carries an N-linked (GlcNAc...) asparagine glycan. Chloride is bound by residues Ser-81, Gly-113, and Cys-114. 2 disulfide bridges follow: Cys-88-Cys-114 and Cys-192-Cys-241. Asn-208, Asn-334, Asn-375, Asn-382, and Asn-423 each carry an N-linked (GlcNAc...) asparagine glycan. Cys-451 and Cys-460 form a disulfide bridge. Residues 470-490 (VLALVGSLSLVSFLIVSFFIY) form a helical membrane-spanning segment. At 491–1057 (RKMQLEKELV…LGERGCSTRG (567 aa)) the chain is on the cytoplasmic side. 2 positions are modified to phosphoserine: Ser-515 and Ser-525. One can recognise a Protein kinase domain in the interval 524 to 801 (GSRLTLSGRG…QIRLALRKFN (278 aa)). Thr-528 bears the Phosphothreonine mark. A phosphoserine mark is found at Ser-530, Ser-534, and Ser-538. Thr-541 is modified (phosphothreonine). Residues 872–1002 (TIYFSDIVGF…DTVNTASRME (131 aa)) form the Guanylate cyclase domain.

This sequence belongs to the adenylyl cyclase class-4/guanylyl cyclase family. Homodimer. Post-translationally, phosphorylation of the protein kinase-like domain is required for full activation by ANP.

The protein localises to the membrane. It carries out the reaction GTP = 3',5'-cyclic GMP + diphosphate. Its function is as follows. Receptor for the atrial natriuretic peptide NPPA/ANP and the brain natriuretic peptide NPPB/BNP which are potent vasoactive hormones playing a key role in cardiovascular homeostasis. Plays an essential role in the regulation of endothelial cell senescence and vascular aging. Upon activation by ANP or BNP, stimulates the production of cyclic guanosine monophosphate (cGMP) that promotes vascular tone and volume homeostasis by activation of protein kinase cGMP-dependent 1/PRKG1 and subsequently PRKAA1, thereby controlling blood pressure and maintaining cardiovascular homeostasis. The chain is Atrial natriuretic peptide receptor 1 (Npr1) from Mus musculus (Mouse).